The sequence spans 504 residues: Maturase K (504 aa).

Belongs to the intron maturase 2 family. MatK subfamily.

It localises to the plastid. The protein resides in the chloroplast. Functionally, usually encoded in the trnK tRNA gene intron. Probably assists in splicing its own and other chloroplast group II introns. This is Maturase K from Arabidopsis lyrata (Lyre-leaved rock-cress).